Reading from the N-terminus, the 285-residue chain is HTH-type transcriptional regulator MurR (285 aa).

One can recognise an HTH rpiR-type domain in the interval 1–77; the sequence is MLYLTKISNA…MALIGEYSAS (77 aa). A DNA-binding region (H-T-H motif) is located at residues 37 to 56; sequence SRQMAKQLGISQSSIVKFAQ. The SIS domain occupies 128-279; the sequence is IIEVISKAPF…SLKMIQRSSE (152 aa).

As to quaternary structure, homotetramer.

It functions in the pathway amino-sugar metabolism; N-acetylmuramate degradation [regulation]. Represses the expression of the murPQ operon involved in the uptake and degradation of N-acetylmuramic acid (MurNAc). Binds to two adjacent inverted repeats within the operator region. MurNAc 6-phosphate, the substrate of MurQ, is the specific inducer that weakens binding of MurR to the operator. In Shigella boydii serotype 4 (strain Sb227), this protein is HTH-type transcriptional regulator MurR.